The following is a 906-amino-acid chain: Coatomer subunit beta' (906 aa).

WD repeat units follow at residues 13 to 52, 55 to 94, 97 to 136, 140 to 180, 183 to 224, 227 to 266, 350 to 388, and 390 to 425; these read ARSD…LVKT, VCDL…RVHM, AHSD…SCSQ, GHTH…PNFT, GHEK…CVQT, GHAQ…LEST, SCEI…NKSF, and SAQE…KSFK. Lysine 627 carries the N6-acetyllysine modification. The WD 9 repeat unit spans residues 746-783; it reads IRTGRLPEAAFLARTYLPSQVSRVVKLWRENLSKVNQK. The interval 837–863 is disordered; the sequence is EEAKGFQPSRSTAQQELDGKPASPTPV. Phosphoserine is present on serine 859. At threonine 861 the chain carries Phosphothreonine. The stretch at 866 to 890 forms a coiled coil; that stretch reads ASHTANKEEKSLLELEVDLDNLELV.

The protein belongs to the WD repeat COPB2 family. As to quaternary structure, oligomeric complex that consists of at least the alpha, beta, beta', gamma, delta, epsilon and zeta subunits. Probably interacts with PEX11A. Interacts with SCYL1. Interacts with JAGN1.

The protein localises to the cytoplasm. The protein resides in the cytosol. Its subcellular location is the golgi apparatus membrane. It localises to the cytoplasmic vesicle. It is found in the COPI-coated vesicle membrane. Its function is as follows. The coatomer is a cytosolic protein complex that binds to dilysine motifs and reversibly associates with Golgi non-clathrin-coated vesicles, which further mediate biosynthetic protein transport from the ER, via the Golgi up to the trans Golgi network. Coatomer complex is required for budding from Golgi membranes, and is essential for the retrograde Golgi-to-ER transport of dilysine-tagged proteins. In mammals, the coatomer can only be recruited by membranes associated to ADP-ribosylation factors (ARFs), which are small GTP-binding proteins; the complex also influences the Golgi structural integrity, as well as the processing, activity, and endocytic recycling of LDL receptors. In terms of biological role, this coatomer complex protein, essential for Golgi budding and vesicular trafficking, is a selective binding protein (RACK) for protein kinase C, epsilon type. It binds to Golgi membranes in a GTP-dependent manner. The protein is Coatomer subunit beta' (COPB2) of Pongo abelii (Sumatran orangutan).